The following is a 338-amino-acid chain: Protein FosB (338 aa).

Disordered stretches follow at residues 1–54 and 80–179; these read MFQA…PGSF and AQSQ…RREL. Polar residues-rich tracts occupy residues 13 to 31 and 102 to 112; these read SRCS…SVDS and TSYSTPGLSAY. Serine 27 carries the post-translational modification Phosphoserine. Residues 123–137 are compositionally biased toward low complexity; it reads PSTSTTTSGPVSARP. One can recognise a bZIP domain in the interval 155–218; that stretch reads EEKRRVRRER…ERLEFVLVAH (64 aa). The tract at residues 157–182 is basic motif; the sequence is KRRVRRERNKLAAAKCRNRRRELTDR. Positions 183–211 are leucine-zipper; it reads LQAETDQLEEEKAELESEIAELQKEKERL. 2 disordered regions span residues 222 to 276 and 316 to 338; these read CKIP…PPNL and GAQR…LLAL. Positions 256-265 are enriched in pro residues; sequence LPPPPPPPLP. Polar residues-rich tracts occupy residues 266–276 and 318–338; these read FQSSRDAPPNL and QRTS…LLAL.

This sequence belongs to the bZIP family. Fos subfamily. Heterodimer; binds to DNA as heterodimer. Component of an AP-1 transcription factor complex; composed of FOS-JUN heterodimers. As part of the AP-1 transcription factor complex, forms heterodimers with JUN, JUNB or JUND, thereby binding to the AP-1 consensus sequence and stimulating transcription. Interacts with the BAF multiprotein chromatin-remodeling complex subunits SMARCB1 and SMARCD1. Interacts with ARID1A and JUN. As to quaternary structure, homodimer under oxidizing conditions and monomer under reducing conditions (in vitro). Heterodimer; binds to DNA as heterodimer. Forms heterodimers with JUNB, JUN or JUND; thereby binding to the AP-1 consensus sequence but does not stimulate transcription. Forms heterodimers with JUND under oxidizing conditions. Phosphorylated. Post-translationally, phosphorylated at Ser-27 by CSNK2A1; phosphorylation increases protein stability and transactivation potential. Expressed in brain, including the preoptic area of the hypothalamus, the main and accessory olfactory bulbs, the pyriform cortex and the hippocampus (at protein level). Expressed in the neurons of the subgranular zone of the dentate gyrus in the hippocampus (at protein level). Expressed in pyramidal cells in CA1 and CA3, in the dentate gyrus and the nucleus accumbens of the striatum (at protein level). In terms of tissue distribution, expressed in the core and shell of the nucleus accumbens of the striatum (at protein level). Expressed in the neurons of the subgranular zone of the dentate gyrus in the hippocampus (at protein level).

Its subcellular location is the nucleus. Heterodimerizes with proteins of the JUN family to form an AP-1 transcription factor complex, thereby enhancing their DNA binding activity to gene promoters containing an AP-1 consensus sequence 5'-TGA[GC]TCA-3' and enhancing their transcriptional activity. As part of the AP-1 complex, facilitates enhancer selection together with cell-type-specific transcription factors by collaboratively binding to nucleosomal enhancers and recruiting the SWI/SNF (BAF) chromatin remodeling complex to establish accessible chromatin. Together with JUN, plays a role in activation-induced cell death of T cells by binding to the AP-1 promoter site of FASLG/CD95L, and inducing its transcription in response to activation of the TCR/CD3 signaling pathway. Exhibits transactivation activity in vitro. Involved in the display of nurturing behavior towards newborns. May play a role in neurogenesis in the hippocampus and in learning and memory-related tasks by regulating the expression of various genes involved in neurogenesis, depression and epilepsy. Implicated in behavioral responses related to morphine reward and spatial memory. Its function is as follows. Exhibits lower transactivation activity than isoform 1 in vitro. The heterodimer with JUN does not display any transcriptional activity, and may thereby act as an transcriptional inhibitor. May be involved in the regulation of neurogenesis in the hippocampus. May play a role in synaptic modifications in nucleus accumbens medium spiny neurons and thereby play a role in adaptive and pathological reward-dependent learning, including maladaptive responses involved in drug addiction. Seems to be more stably expressed with a half-life of ~9.5 hours in cell culture as compared to 1.5 hours half-life of isoform 1. The polypeptide is Protein FosB (Mus musculus (Mouse)).